We begin with the raw amino-acid sequence, 352 residues long: Ribosomal RNA large subunit methyltransferase M (352 aa).

S-adenosyl-L-methionine is bound by residues Ser184, 217–220, Asp236, Asp256, and Asp272; that span reads APGG. Catalysis depends on Lys301, which acts as the Proton acceptor.

Belongs to the class I-like SAM-binding methyltransferase superfamily. RNA methyltransferase RlmE family. RlmM subfamily. As to quaternary structure, monomer.

The protein resides in the cytoplasm. It catalyses the reaction cytidine(2498) in 23S rRNA + S-adenosyl-L-methionine = 2'-O-methylcytidine(2498) in 23S rRNA + S-adenosyl-L-homocysteine + H(+). Functionally, catalyzes the 2'-O-methylation at nucleotide C2498 in 23S rRNA. The polypeptide is Ribosomal RNA large subunit methyltransferase M (Pseudomonas aeruginosa (strain UCBPP-PA14)).